A 208-amino-acid chain; its full sequence is Protein-L-isoaspartate O-methyltransferase (208 aa).

The active site involves Ser59.

The protein belongs to the methyltransferase superfamily. L-isoaspartyl/D-aspartyl protein methyltransferase family.

The protein localises to the cytoplasm. The catalysed reaction is [protein]-L-isoaspartate + S-adenosyl-L-methionine = [protein]-L-isoaspartate alpha-methyl ester + S-adenosyl-L-homocysteine. In terms of biological role, catalyzes the methyl esterification of L-isoaspartyl residues in peptides and proteins that result from spontaneous decomposition of normal L-aspartyl and L-asparaginyl residues. It plays a role in the repair and/or degradation of damaged proteins. This chain is Protein-L-isoaspartate O-methyltransferase, found in Photorhabdus laumondii subsp. laumondii (strain DSM 15139 / CIP 105565 / TT01) (Photorhabdus luminescens subsp. laumondii).